A 691-amino-acid polypeptide reads, in one-letter code: Elongation factor G (691 aa).

A tr-type G domain is found at E8–L283. Residues A17–T24, D81–H85, and N135–D138 each bind GTP.

This sequence belongs to the TRAFAC class translation factor GTPase superfamily. Classic translation factor GTPase family. EF-G/EF-2 subfamily.

Its subcellular location is the cytoplasm. In terms of biological role, catalyzes the GTP-dependent ribosomal translocation step during translation elongation. During this step, the ribosome changes from the pre-translocational (PRE) to the post-translocational (POST) state as the newly formed A-site-bound peptidyl-tRNA and P-site-bound deacylated tRNA move to the P and E sites, respectively. Catalyzes the coordinated movement of the two tRNA molecules, the mRNA and conformational changes in the ribosome. The sequence is that of Elongation factor G from Lawsonia intracellularis (strain PHE/MN1-00).